The chain runs to 329 residues: Acetyl-coenzyme A carboxylase carboxyl transferase subunit alpha (329 aa).

A CoA carboxyltransferase C-terminal domain is found at 40–294 (QLESLAARRR…RAALERHLGE (255 aa)).

It belongs to the AccA family. Acetyl-CoA carboxylase is a heterohexamer composed of biotin carboxyl carrier protein (AccB), biotin carboxylase (AccC) and two subunits each of ACCase subunit alpha (AccA) and ACCase subunit beta (AccD).

It localises to the cytoplasm. The enzyme catalyses N(6)-carboxybiotinyl-L-lysyl-[protein] + acetyl-CoA = N(6)-biotinyl-L-lysyl-[protein] + malonyl-CoA. Its pathway is lipid metabolism; malonyl-CoA biosynthesis; malonyl-CoA from acetyl-CoA: step 1/1. Functionally, component of the acetyl coenzyme A carboxylase (ACC) complex. First, biotin carboxylase catalyzes the carboxylation of biotin on its carrier protein (BCCP) and then the CO(2) group is transferred by the carboxyltransferase to acetyl-CoA to form malonyl-CoA. This Parasynechococcus marenigrum (strain WH8102) protein is Acetyl-coenzyme A carboxylase carboxyl transferase subunit alpha.